Reading from the N-terminus, the 360-residue chain is MLPQEKLDLILRRYDEVSARLNEAVEPALYVQLSREFAGLEQVAAAIRDYRSQMQEVEGLAAMLADPTTDSEMRGLAEEELRDAKERLEALEHQLKIALLPKDAADERSAILEVRAGTGGDEAALFAGDLFRMYQRYAESKGWSVEIISANEGAAGGFKEIIAEIAGRGVFAKLKFESGAHRVQRVPDTETQGRIHTSAATVAVLPEAQEVDVEINEADLKIDTMRAQGAGGQHVNKTESAIRITHIPTGTIVFVQDERSQHKNRARAMALLRSRIYDEQRQKLDAERAADRRSQVGSGDRSERIRTYNFPQGRVTDHRINLTLYKLDKVITGEALDEVIDALTTHHQAALLADSESGGL.

At glutamine 233 the chain carries N5-methylglutamine. The segment at 283-305 is disordered; it reads KLDAERAADRRSQVGSGDRSERI.

This sequence belongs to the prokaryotic/mitochondrial release factor family. In terms of processing, methylated by PrmC. Methylation increases the termination efficiency of RF1.

It localises to the cytoplasm. Functionally, peptide chain release factor 1 directs the termination of translation in response to the peptide chain termination codons UAG and UAA. The chain is Peptide chain release factor 1 from Methylocella silvestris (strain DSM 15510 / CIP 108128 / LMG 27833 / NCIMB 13906 / BL2).